Here is a 344-residue protein sequence, read N- to C-terminus: tRNA(Ile)-lysidine synthase (344 aa).

An ATP-binding site is contributed by 43 to 48; the sequence is SGGADS.

Belongs to the tRNA(Ile)-lysidine synthase family.

The protein resides in the cytoplasm. It carries out the reaction cytidine(34) in tRNA(Ile2) + L-lysine + ATP = lysidine(34) in tRNA(Ile2) + AMP + diphosphate + H(+). In terms of biological role, ligates lysine onto the cytidine present at position 34 of the AUA codon-specific tRNA(Ile) that contains the anticodon CAU, in an ATP-dependent manner. Cytidine is converted to lysidine, thus changing the amino acid specificity of the tRNA from methionine to isoleucine. This is tRNA(Ile)-lysidine synthase from Bordetella bronchiseptica (strain ATCC BAA-588 / NCTC 13252 / RB50) (Alcaligenes bronchisepticus).